The chain runs to 239 residues: Uridylate kinase (239 aa).

Residue 10–13 coordinates ATP; the sequence is KFSG. An involved in allosteric activation by GTP region spans residues 18–23; it reads GENGFG. Position 52 (G52) interacts with UMP. The ATP site is built by G53 and R57. Residues D73 and 134–141 each bind UMP; that span reads TGNPYFTT. ATP-binding residues include T161, Y167, and D170.

Belongs to the UMP kinase family. As to quaternary structure, homohexamer.

It is found in the cytoplasm. The catalysed reaction is UMP + ATP = UDP + ADP. It participates in pyrimidine metabolism; CTP biosynthesis via de novo pathway; UDP from UMP (UMPK route): step 1/1. Its activity is regulated as follows. Allosterically activated by GTP. Inhibited by UTP. Catalyzes the reversible phosphorylation of UMP to UDP. The protein is Uridylate kinase of Campylobacter jejuni subsp. doylei (strain ATCC BAA-1458 / RM4099 / 269.97).